The primary structure comprises 35 residues: Potassium channel toxin alpha-KTx 6.15 (35 aa).

Cystine bridges form between C3-C24, C9-C29, C13-C31, and C19-C34.

This sequence belongs to the short scorpion toxin superfamily. Potassium channel inhibitor family. Alpha-KTx 06 subfamily. In terms of tissue distribution, expressed by the venom gland.

It localises to the secreted. In terms of biological role, blocks voltage-gated potassium channels rKv1.1/KCNA1 (IC(50)=13 nM), rKv1.2/KCNA2 (IC(50)=16 nM) and rKv1.3/KCNA3 (IC(50)=2 nM). The sequence is that of Potassium channel toxin alpha-KTx 6.15 from Hemiscorpius lepturus (Scorpion).